Consider the following 276-residue polypeptide: Bis(5'-nucleosyl)-tetraphosphatase, symmetrical (276 aa).

Belongs to the Ap4A hydrolase family.

It catalyses the reaction P(1),P(4)-bis(5'-adenosyl) tetraphosphate + H2O = 2 ADP + 2 H(+). Functionally, hydrolyzes diadenosine 5',5'''-P1,P4-tetraphosphate to yield ADP. This is Bis(5'-nucleosyl)-tetraphosphatase, symmetrical from Legionella pneumophila (strain Corby).